The primary structure comprises 542 residues: Glucans biosynthesis protein D (542 aa).

Positions 1-31 (MHRRNLLKASMAIAAYTGLSATGLLASRAWA) form a signal peptide, tat-type signal.

The protein belongs to the OpgD/OpgG family. Predicted to be exported by the Tat system. The position of the signal peptide cleavage has not been experimentally proven.

The protein resides in the periplasm. It participates in glycan metabolism; osmoregulated periplasmic glucan (OPG) biosynthesis. Functionally, probably involved in the control of the structural glucose backbone of osmoregulated periplasmic glucans (OPGs). This Pseudomonas fluorescens (strain Pf0-1) protein is Glucans biosynthesis protein D.